The sequence spans 538 residues: Cytochrome P450 52A4 (538 aa).

Residues 27-46 form a helical membrane-spanning segment; that stretch reads WYILIPTILLTLNFLSILHT. C485 lines the heme pocket.

The protein belongs to the cytochrome P450 family. Heme is required as a cofactor.

Its subcellular location is the membrane. Its function is as follows. Together with an NADPH cytochrome P450 the enzyme system catalyzes the terminal hydroxylation as the first step in the assimilation of alkanes and fatty acids. The polypeptide is Cytochrome P450 52A4 (CYP52A4) (Candida maltosa (Yeast)).